Reading from the N-terminus, the 256-residue chain is 5-keto-4-deoxy-D-glucarate aldolase (256 aa).

His50 functions as the Proton acceptor in the catalytic mechanism. Gln151 provides a ligand contact to substrate. Glu153 provides a ligand contact to Mg(2+). Ser178 and Asp179 together coordinate substrate. Mg(2+) is bound at residue Asp179.

It belongs to the HpcH/HpaI aldolase family. KDGluc aldolase subfamily. As to quaternary structure, homohexamer; trimer of dimers. Mg(2+) is required as a cofactor.

The enzyme catalyses 5-dehydro-4-deoxy-D-glucarate = 2-hydroxy-3-oxopropanoate + pyruvate. It catalyses the reaction 2-dehydro-3-deoxy-D-glucarate = 2-hydroxy-3-oxopropanoate + pyruvate. Its pathway is carbohydrate acid metabolism; galactarate degradation; D-glycerate from galactarate: step 2/3. Catalyzes the reversible retro-aldol cleavage of both 5-keto-4-deoxy-D-glucarate and 2-keto-3-deoxy-D-glucarate to pyruvate and tartronic semialdehyde. The chain is 5-keto-4-deoxy-D-glucarate aldolase from Salmonella paratyphi C (strain RKS4594).